The following is a 286-amino-acid chain: tRNA uridine(34) hydroxylase (286 aa).

The Rhodanese domain occupies 130–225 (RGDDVVFFDG…YGETFGDRGL (96 aa)). Catalysis depends on cysteine 185, which acts as the Cysteine persulfide intermediate.

The protein belongs to the TrhO family.

It carries out the reaction uridine(34) in tRNA + AH2 + O2 = 5-hydroxyuridine(34) in tRNA + A + H2O. Catalyzes oxygen-dependent 5-hydroxyuridine (ho5U) modification at position 34 in tRNAs. The polypeptide is tRNA uridine(34) hydroxylase (Rhodococcus erythropolis (strain PR4 / NBRC 100887)).